The chain runs to 380 residues: Cytochrome b (380 aa).

The next 4 membrane-spanning stretches (helical) occupy residues 34–54 (FGSL…LLAA), 78–99 (WLIR…YMHV), 114–134 (WNTG…GYVL), and 179–199 (FFTL…IHLT). Heme b-binding residues include His-84 and His-98. The heme b site is built by His-183 and His-197. His-202 contributes to the a ubiquinone binding site. The next 4 membrane-spanning stretches (helical) occupy residues 227–247 (LKDI…ALFS), 289–309 (LGGV…PLLH), 321–341 (LSQL…WVGS), and 348–368 (FMII…ILFP).

Belongs to the cytochrome b family. The cytochrome bc1 complex contains 11 subunits: 3 respiratory subunits (MT-CYB, CYC1 and UQCRFS1), 2 core proteins (UQCRC1 and UQCRC2) and 6 low-molecular weight proteins (UQCRH/QCR6, UQCRB/QCR7, UQCRQ/QCR8, UQCR10/QCR9, UQCR11/QCR10 and a cleavage product of UQCRFS1). This cytochrome bc1 complex then forms a dimer. Heme b serves as cofactor.

The protein resides in the mitochondrion inner membrane. Functionally, component of the ubiquinol-cytochrome c reductase complex (complex III or cytochrome b-c1 complex) that is part of the mitochondrial respiratory chain. The b-c1 complex mediates electron transfer from ubiquinol to cytochrome c. Contributes to the generation of a proton gradient across the mitochondrial membrane that is then used for ATP synthesis. In Balearica pavonina (Black crowned-crane), this protein is Cytochrome b (MT-CYB).